The sequence spans 428 residues: UPF0761 membrane protein Ppha_1623 (428 aa).

The next 6 helical transmembrane spans lie at 52-72 (LLSI…FVVF), 108-128 (SVPI…ISTV), 148-168 (FTLY…SLAA), 189-209 (LLSF…YMLV), 216-233 (FVHA…FELS), and 252-272 (GALS…IVVL).

Belongs to the UPF0761 family.

Its subcellular location is the cell inner membrane. This chain is UPF0761 membrane protein Ppha_1623, found in Pelodictyon phaeoclathratiforme (strain DSM 5477 / BU-1).